The primary structure comprises 186 residues: Small ribosomal subunit protein eS7 (186 aa).

Belongs to the eukaryotic ribosomal protein eS7 family. In terms of assembly, component of the small ribosomal subunit. Mature ribosomes consist of a small (40S) and a large (60S) subunit. The 40S subunit contains about 32 different proteins and 1 molecule of RNA (18S). The 60S subunit contains 45 different proteins and 3 molecules of RNA (25S, 5.8S and 5S).

The protein localises to the cytoplasm. Functionally, component of the ribosome, a large ribonucleoprotein complex responsible for the synthesis of proteins in the cell. The small ribosomal subunit (SSU) binds messenger RNAs (mRNAs) and translates the encoded message by selecting cognate aminoacyl-transfer RNA (tRNA) molecules. The large subunit (LSU) contains the ribosomal catalytic site termed the peptidyl transferase center (PTC), which catalyzes the formation of peptide bonds, thereby polymerizing the amino acids delivered by tRNAs into a polypeptide chain. The nascent polypeptides leave the ribosome through a tunnel in the LSU and interact with protein factors that function in enzymatic processing, targeting, and the membrane insertion of nascent chains at the exit of the ribosomal tunnel. RPS7A is involved in nucleolar processing of pre-18S ribosomal RNA and ribosome assembly. This is Small ribosomal subunit protein eS7 (RPS7A) from Candida albicans (strain SC5314 / ATCC MYA-2876) (Yeast).